The following is a 553-amino-acid chain: Copine-9 (553 aa).

C2 domains are found at residues 1-125 and 132-255; these read MSLG…ERTL and KCGT…FTVY. The N-linked (GlcNAc...) asparagine glycan is linked to Asn95. The Ca(2+) site is built by Asp163, Asp169, Asp225, Asp227, and Asp233. Residues 299 to 500 form the VWFA domain; the sequence is NFTVAIDFTA…VQFVPFRDYV (202 aa). Positions 531-553 are disordered; the sequence is TRDIQPRPPPPANPSPIPAPEQP. Over residues 536–553 the composition is skewed to pro residues; that stretch reads PRPPPPANPSPIPAPEQP.

Belongs to the copine family. The cofactor is Ca(2+). As to expression, expressed in melanocytes.

Its function is as follows. Probable calcium-dependent phospholipid-binding protein that may play a role in calcium-mediated intracellular processes. Plays a role in dendrite formation by melanocytes. This Homo sapiens (Human) protein is Copine-9.